The primary structure comprises 310 residues: MNLPIVKGEYRKDYNLKHLTWFKVGGNAEIFFKPVDSEDLASFLVQNKQKLPITTFGAGSNIIIRDGGIEGVTIKLGQNFSNIGFTDDGHLIVGSSCLNFSLAKFCQVNAISGFEFLVGIPGTIGGGVAMNAGAYGCEFKDILVRIEAIDFAGNFRTFTNEEIGFKYRGNNLPKDLIILKAVFKVNKGNSEDILARMNEINAARSSTQPIKERTGGSTFANPEGFKSWQLIDKAGLRGYRIGDASISELHCNFMINNGNATAKELEDLGNFVQQKVFEDSGIKLNWEIKRIGKVSSRAWLDHGIQRKIIK.

The FAD-binding PCMH-type domain maps to 23–188 (KVGGNAEIFF…LKAVFKVNKG (166 aa)). The active site involves R168. Catalysis depends on S217, which acts as the Proton donor. E287 is a catalytic residue.

It belongs to the MurB family. FAD is required as a cofactor.

The protein resides in the cytoplasm. It carries out the reaction UDP-N-acetyl-alpha-D-muramate + NADP(+) = UDP-N-acetyl-3-O-(1-carboxyvinyl)-alpha-D-glucosamine + NADPH + H(+). Its pathway is cell wall biogenesis; peptidoglycan biosynthesis. Cell wall formation. This Rickettsia bellii (strain OSU 85-389) protein is UDP-N-acetylenolpyruvoylglucosamine reductase.